We begin with the raw amino-acid sequence, 598 residues long: Elongation factor 4 (598 aa).

The tr-type G domain occupies 2-184 (KNIRNFSIIA…EIVRCIPPPV (183 aa)). GTP is bound by residues 14 to 19 (DHGKST) and 131 to 134 (NKID).

Belongs to the TRAFAC class translation factor GTPase superfamily. Classic translation factor GTPase family. LepA subfamily.

It is found in the cell inner membrane. The enzyme catalyses GTP + H2O = GDP + phosphate + H(+). Functionally, required for accurate and efficient protein synthesis under certain stress conditions. May act as a fidelity factor of the translation reaction, by catalyzing a one-codon backward translocation of tRNAs on improperly translocated ribosomes. Back-translocation proceeds from a post-translocation (POST) complex to a pre-translocation (PRE) complex, thus giving elongation factor G a second chance to translocate the tRNAs correctly. Binds to ribosomes in a GTP-dependent manner. This is Elongation factor 4 from Psychromonas ingrahamii (strain DSM 17664 / CCUG 51855 / 37).